The primary structure comprises 916 residues: MSKKRLYEIAKEIGKESKEIVEKAKSLGLEVKSHASSVEESDAKRIVESFTVSVEPKAVTPTSKVEKEAKAQEGSVAAEPKAAATKPAGRPRPQNRNFKAEREARAKAEAERRQNNGERRNQNKGQNNRQKDNRNHGSQDRRNDNRNNRNRQNDNRRDNRNHFQNRQEASKSQPTGPRFDFKARAAALKAEQNAEYSRQSETRFHEAQEAKRQAAQAKEKAKKLNQKEQPTVEAAATAAPQAQPQTVEQVTHPAAVDTRRKKQARPDKSRDFSHENEDGPKQNKHKKNRNKQNQVRNQKNSNWNKKNKKSKNNRNHNANLKPVTERKFHELPKEFEYTEGMTVAEIAKRIKREPAEIVKKLFMMGVMATQNQSLDADTIELLMVDYGIEAHQKVEVDTADIERFFVEDDYLNPKNMVERAPVVTIMGHVDHGKTTLLDTLRNSRIATGEAGGITQHIGAYQIEEGGKKITFLDTPGHAAFTSMRARGASVTDITILIVAADDGVMPQTIEAINHSKAADVPIIVAINKIDKPGANPERVIGELAEYGVISTAWGGDSEFVEISAKFGQNIEELLETVLLVAEIQELKADPTVRAIGTVIEARLDKGKGAVATLLVQQGTLHVQDPIVVGNTFGRVRAMTNDLGRRVKVAAPSTPVSITGLNEAPMAGDHFAVYEDEKAARAAGEERAKRALLKQRQLTHRVSLDNLFDTLKAGEVKSVNVIIKADVQGSVEALAASLLKIDVEGVKVNVVHSAVGAINESDITLAEASNAVIIGFNVRPTPQARQQAEADEVEIRLHSIIYKVIEEVEDAMKGMLDPEFEEKIIGEALIRETFKVSKVGTIGGFMVTNGKITRDSSARVIRDGVVVFDGKLASLKHYKDDVKEVGNGQEGGLMIENYNDIKIDDTIEAYIMEEIKR.

Residues 55–324 form a disordered region; it reads EPKAVTPTSK…NHNANLKPVT (270 aa). A compositionally biased stretch (low complexity) spans 77–88; sequence AAEPKAAATKPA. Basic and acidic residues-rich tracts occupy residues 98–121, 129–161, and 198–212; these read FKAEREARAKAEAERRQNNGERRN, RQKDNRNHGSQDRRNDNRNNRNRQNDNRRDNRN, and RQSETRFHEAQEAKR. Over residues 227-250 the composition is skewed to low complexity; it reads KEQPTVEAAATAAPQAQPQTVEQV. Over residues 264–281 the composition is skewed to basic and acidic residues; that stretch reads ARPDKSRDFSHENEDGPK. Residues 291–304 are compositionally biased toward low complexity; it reads KQNQVRNQKNSNWN. The segment covering 305–314 has biased composition (basic residues); the sequence is KKNKKSKNNR. Residues 418-585 enclose the tr-type G domain; it reads ERAPVVTIMG…TVLLVAEIQE (168 aa). Residues 427 to 434 are G1; that stretch reads GHVDHGKT. 427–434 contacts GTP; the sequence is GHVDHGKT. The G2 stretch occupies residues 452-456; the sequence is GITQH. Positions 473–476 are G3; sequence DTPG. GTP-binding positions include 473-477 and 527-530; these read DTPGH and NKID. The G4 stretch occupies residues 527-530; that stretch reads NKID. The interval 563 to 565 is G5; the sequence is SAK.

Belongs to the TRAFAC class translation factor GTPase superfamily. Classic translation factor GTPase family. IF-2 subfamily.

The protein localises to the cytoplasm. Functionally, one of the essential components for the initiation of protein synthesis. Protects formylmethionyl-tRNA from spontaneous hydrolysis and promotes its binding to the 30S ribosomal subunits. Also involved in the hydrolysis of GTP during the formation of the 70S ribosomal complex. This is Translation initiation factor IF-2 from Streptococcus mutans serotype c (strain ATCC 700610 / UA159).